A 441-amino-acid chain; its full sequence is BTB/POZ domain-containing protein At3g05675 (441 aa).

A BTB domain is found at 20-98 (SDIVVRLRNE…LYVVSDDVHE (79 aa)).

The protein operates within protein modification; protein ubiquitination. Its function is as follows. May act as a substrate-specific adapter of an E3 ubiquitin-protein ligase complex (CUL3-RBX1-BTB) which mediates the ubiquitination and subsequent proteasomal degradation of target proteins. The sequence is that of BTB/POZ domain-containing protein At3g05675 from Arabidopsis thaliana (Mouse-ear cress).